The chain runs to 673 residues: Translation factor GUF1 homolog, mitochondrial (673 aa).

Residues 68–260 (ERIRNFSIIA…AVIERIPSPP (193 aa)) form the tr-type G domain. GTP is bound by residues 77–84 (AHVDHGKS), 153–157 (DTPGH), and 207–210 (NKID).

This sequence belongs to the TRAFAC class translation factor GTPase superfamily. Classic translation factor GTPase family. LepA subfamily.

The protein localises to the mitochondrion inner membrane. The enzyme catalyses GTP + H2O = GDP + phosphate + H(+). Its function is as follows. Promotes mitochondrial protein synthesis. May act as a fidelity factor of the translation reaction, by catalyzing a one-codon backward translocation of tRNAs on improperly translocated ribosomes. Binds to mitochondrial ribosomes in a GTP-dependent manner. The sequence is that of Translation factor GUF1 homolog, mitochondrial from Ricinus communis (Castor bean).